A 382-amino-acid chain; its full sequence is Galactokinase (382 aa).

34–37 (EHTD) provides a ligand contact to substrate. Residue 124–130 (GAGLSSS) participates in ATP binding. Residues Ser-130 and Glu-162 each contribute to the Mg(2+) site. Asp-174 acts as the Proton acceptor in catalysis. Tyr-223 serves as a coordination point for substrate.

Belongs to the GHMP kinase family. GalK subfamily.

Its subcellular location is the cytoplasm. It catalyses the reaction alpha-D-galactose + ATP = alpha-D-galactose 1-phosphate + ADP + H(+). Its pathway is carbohydrate metabolism; galactose metabolism. Catalyzes the transfer of the gamma-phosphate of ATP to D-galactose to form alpha-D-galactose-1-phosphate (Gal-1-P). This is Galactokinase from Escherichia coli O81 (strain ED1a).